The chain runs to 72 residues: uncharacterized protein (72 aa).

The protein localises to the host cytoplasm. This is an uncharacterized protein from Enterobacteriaceae (Bacteriophage Mu).